The primary structure comprises 363 residues: uncharacterized protein (363 aa).

Transmembrane regions (helical) follow at residues 34-54, 60-80, 91-111, and 112-132; these read YVYD…IILW, LALF…TLLV, EIAD…TAAG, and LMFS…PLFL. A compositionally biased stretch (polar residues) spans 232–245; it reads SSTTTHSTDSEQIL. The tract at residues 232 to 363 is disordered; it reads SSTTTHSTDS…SSQKKKPSRK (132 aa). Composition is skewed to low complexity over residues 246–268 and 275–285; these read TSVS…TPPN and DSNSSDSSSSS. Residues 322 to 342 are compositionally biased toward basic and acidic residues; the sequence is SRSERNAQHHRNKDQEQRQDS.

Belongs to the chlamydial CPn_0443/CT_005/TC_0273 family.

It localises to the cell membrane. This is an uncharacterized protein from Chlamydia trachomatis serovar D (strain ATCC VR-885 / DSM 19411 / UW-3/Cx).